A 361-amino-acid polypeptide reads, in one-letter code: MNNQDLINDKSKNGLTYAKAGVNIDMGNAMVEKIKPFIRATKRAGTDAEIGGFGGLFDLKAAGFTDPILVAANDGVGTKLKIAIEVGIHDTIGIDLVAMCVNDLLVQGAEPLFFLDYFATGKLDPEQGAAIVSGIAKGCQQAGAALIGGETAEMPDMYAKGDYDLAGFAVGAAERSALLPSKDLTEGDIILGLSSSGIHSNGFSLVRRIIQQSDLKWNDHAPFNPQMNLGTALLTPTRIYVKSLLPIIKSYKGIKALAHITGGGFLENIPRVLPSSLCAEINLSAIHVPSIFSWIAKQGKIEKIEMLRTFNCGVGMIIIVAQHEVEKVTQELKMQGETVTLLGKLTKRQNKGITFKGALHL.

Belongs to the AIR synthase family.

It is found in the cytoplasm. It carries out the reaction 2-formamido-N(1)-(5-O-phospho-beta-D-ribosyl)acetamidine + ATP = 5-amino-1-(5-phospho-beta-D-ribosyl)imidazole + ADP + phosphate + H(+). The protein operates within purine metabolism; IMP biosynthesis via de novo pathway; 5-amino-1-(5-phospho-D-ribosyl)imidazole from N(2)-formyl-N(1)-(5-phospho-D-ribosyl)glycinamide: step 2/2. This is Phosphoribosylformylglycinamidine cyclo-ligase from Bartonella henselae (strain ATCC 49882 / DSM 28221 / CCUG 30454 / Houston 1) (Rochalimaea henselae).